A 615-amino-acid polypeptide reads, in one-letter code: MQICASIAQFLAWVSFLVLLATVGSSSSSESLLNCQPLDHHLVNPSRLLGFLRAMSSVNDFITNDKLWVVSSITDVSPPIYVFLQCREDLSVSDCRHCFNESRLELERKCSGSGGRIHSDRCFLRFDDRDFSEEFVDPTFDKANCEETGTGFGEFWRFLDEALVNVTLKAVKNGGFGAASVIKTEAVYALAQCWQTLDENTCRECLVNARSSLRACDGHEARAFFTGCYLKYSTHKFFDDAAEHKPDADQRNFIRSSFFPHLSDRDVTRLAIAAISLSILTSLGAFISYRRVSRKRKAQVPSCVNFKYEMLEKATESFHDSMKLGQGGAGSVYKGILPDGRIVAVKKLFFNTREWADQFFNEVNLISGVQHKNLVRLLGCSIEGPKSLLVYEYVHNRSLDQILFMKNTVHILSWKQRFNIIIGISEGLEYLHRGSEVKIIHRDIKTSNILLDRNLSPKIADFGLIRSMGTDKTQTNTGIAGTLGYLAPEYLIKGQLTEKADVYAFGVLIIEIVTGKKNNAFTQGTSSVLYSVWEHFKANTLDRSIDPRLKGSFVEEEALKVLQIGLLCVQSSVELRPSMSEIVFMLQNKDSKFEYPKQPPFLSASVLMPDEETRV.

Residues Met1 to Ser28 form the signal peptide. 2 Gnk2-homologous domains span residues Ser29 to Phe131 and Asp137 to Phe237. Over Ser29–Asp266 the chain is Extracellular. N-linked (GlcNAc...) asparagine glycans are attached at residues Asn100 and Asn165. Residues Val267–Ile287 traverse the membrane as a helical segment. Over Ser288–Val615 the chain is Cytoplasmic. The region spanning Phe318–Leu602 is the Protein kinase domain. ATP contacts are provided by residues Leu324–Val332 and Lys346. Catalysis depends on Asp443, which acts as the Proton acceptor.

The protein belongs to the protein kinase superfamily. Ser/Thr protein kinase family. CRK subfamily. As to expression, expressed in the whole plant at low levels.

The protein localises to the membrane. The enzyme catalyses L-seryl-[protein] + ATP = O-phospho-L-seryl-[protein] + ADP + H(+). The catalysed reaction is L-threonyl-[protein] + ATP = O-phospho-L-threonyl-[protein] + ADP + H(+). This Arabidopsis thaliana (Mouse-ear cress) protein is Cysteine-rich receptor-like protein kinase 1.